Here is a 351-residue protein sequence, read N- to C-terminus: Large ribosomal subunit protein uL3 (351 aa).

2 disordered regions span residues 1-31 and 246-271; these read MGHR…TPRT and KGSR…GQLG.

The protein belongs to the universal ribosomal protein uL3 family. As to quaternary structure, part of the 50S ribosomal subunit. Forms a cluster with proteins L14 and L24e.

One of the primary rRNA binding proteins, it binds directly near the 3'-end of the 23S rRNA, where it nucleates assembly of the 50S subunit. The protein is Large ribosomal subunit protein uL3 of Saccharolobus islandicus (strain M.14.25 / Kamchatka #1) (Sulfolobus islandicus).